We begin with the raw amino-acid sequence, 354 residues long: UPF0283 membrane protein plu2581 (354 aa).

The next 3 helical transmembrane spans lie at 71–91, 101–121, and 214–234; these read MVYG…VQWI, SALG…GSLV, and ESAL…FIAW.

The protein belongs to the UPF0283 family.

The protein resides in the cell inner membrane. The sequence is that of UPF0283 membrane protein plu2581 from Photorhabdus laumondii subsp. laumondii (strain DSM 15139 / CIP 105565 / TT01) (Photorhabdus luminescens subsp. laumondii).